The chain runs to 132 residues: Sec-independent protein translocase protein TatB (132 aa).

The helical transmembrane segment at 2-22 (FDGIGFMELLLIGILGLVVLG) threads the bilayer. The segment at 86-132 (LKSAAQSVNRPYKVEDISPASSSAPVDPAPTETKTAETSANSEKPNG) is disordered. Residues 103-115 (SPASSSAPVDPAP) are compositionally biased toward low complexity. Over residues 117 to 132 (ETKTAETSANSEKPNG) the composition is skewed to polar residues.

Belongs to the TatB family. The Tat system comprises two distinct complexes: a TatABC complex, containing multiple copies of TatA, TatB and TatC subunits, and a separate TatA complex, containing only TatA subunits. Substrates initially bind to the TatABC complex, which probably triggers association of the separate TatA complex to form the active translocon.

Its subcellular location is the cell inner membrane. Functionally, part of the twin-arginine translocation (Tat) system that transports large folded proteins containing a characteristic twin-arginine motif in their signal peptide across membranes. Together with TatC, TatB is part of a receptor directly interacting with Tat signal peptides. TatB may form an oligomeric binding site that transiently accommodates folded Tat precursor proteins before their translocation. The polypeptide is Sec-independent protein translocase protein TatB (Shewanella sediminis (strain HAW-EB3)).